The primary structure comprises 280 residues: Manganese transport system membrane protein MntC (280 aa).

Transmembrane regions (helical) follow at residues 16–36 (ALITSVTVGIVSGVIGSFIIL), 41–61 (LMGDAISHAVLPGVAISYMMG), 62–82 (MNFFIGAATFGIAAALGIGFV), 92–112 (TAIGIVFSAFFALGIILISFA), 137–157 (TIIIAILVISLVAIFYKEFLV), 168–188 (YGLNVRFLHYFLMLLLTLVTV), 193–213 (TVGIILVVAMLITPAATAYLL), 221–241 (IMLASTFGAVSAIIGLYFSYI), and 244–264 (LASGAAMVLVATIIFFIAFLF).

The protein belongs to the ABC-3 integral membrane protein family.

Its subcellular location is the cell membrane. In terms of biological role, this protein is probably a component of a manganese permease, a binding protein-dependent, ATP-driven transport system. This is Manganese transport system membrane protein MntC (mntC) from Listeria innocua serovar 6a (strain ATCC BAA-680 / CLIP 11262).